The primary structure comprises 212 residues: Histidine biosynthesis bifunctional protein HisIE (212 aa).

The interval 1–109 (MRPDFHKQEL…ELIPFDDSDI (109 aa)) is phosphoribosyl-AMP cyclohydrolase. Residues 110 to 212 (FSELEKQIID…KKEFHTRTAD (103 aa)) are phosphoribosyl-ATP pyrophosphohydrolase.

This sequence in the N-terminal section; belongs to the PRA-CH family. The protein in the C-terminal section; belongs to the PRA-PH family.

The protein resides in the cytoplasm. The enzyme catalyses 1-(5-phospho-beta-D-ribosyl)-ATP + H2O = 1-(5-phospho-beta-D-ribosyl)-5'-AMP + diphosphate + H(+). It carries out the reaction 1-(5-phospho-beta-D-ribosyl)-5'-AMP + H2O = 1-(5-phospho-beta-D-ribosyl)-5-[(5-phospho-beta-D-ribosylamino)methylideneamino]imidazole-4-carboxamide. It functions in the pathway amino-acid biosynthesis; L-histidine biosynthesis; L-histidine from 5-phospho-alpha-D-ribose 1-diphosphate: step 2/9. It participates in amino-acid biosynthesis; L-histidine biosynthesis; L-histidine from 5-phospho-alpha-D-ribose 1-diphosphate: step 3/9. In Lactococcus lactis subsp. lactis (strain IL1403) (Streptococcus lactis), this protein is Histidine biosynthesis bifunctional protein HisIE (hisI).